The sequence spans 246 residues: uncharacterized protein (246 aa).

Composition is skewed to basic residues over residues 1–10 and 79–97; these read MVWRFQKHIG and TRRRGAGQRHCNQKPKAGR. The tract at residues 1–184 is disordered; it reads MVWRFQKHIG…LPPAHVPPTL (184 aa). Over residues 158-180 the composition is skewed to pro residues; that stretch reads PPFPPPPPPGDPTPPSPLPPAHV.

This is an uncharacterized protein from Homo sapiens (Human).